Consider the following 505-residue polypeptide: Probable cytosol aminopeptidase (505 aa).

Residues Lys-268 and Asp-273 each coordinate Mn(2+). The active site involves Lys-280. Asp-291, Asp-350, and Glu-352 together coordinate Mn(2+). Residue Arg-354 is part of the active site.

Belongs to the peptidase M17 family. It depends on Mn(2+) as a cofactor.

Its subcellular location is the cytoplasm. The catalysed reaction is Release of an N-terminal amino acid, Xaa-|-Yaa-, in which Xaa is preferably Leu, but may be other amino acids including Pro although not Arg or Lys, and Yaa may be Pro. Amino acid amides and methyl esters are also readily hydrolyzed, but rates on arylamides are exceedingly low.. The enzyme catalyses Release of an N-terminal amino acid, preferentially leucine, but not glutamic or aspartic acids.. In terms of biological role, presumably involved in the processing and regular turnover of intracellular proteins. Catalyzes the removal of unsubstituted N-terminal amino acids from various peptides. This chain is Probable cytosol aminopeptidase, found in Syntrophobacter fumaroxidans (strain DSM 10017 / MPOB).